Reading from the N-terminus, the 305-residue chain is Testis-expressed protein 52 (305 aa).

A disordered region spans residues 284–305 (HLSKAQASKSPARKRKRRPGHF). A compositionally biased stretch (basic residues) spans 294 to 305 (PARKRKRRPGHF).

As to expression, expressed in Testis.

This Homo sapiens (Human) protein is Testis-expressed protein 52.